Here is a 120-residue protein sequence, read N- to C-terminus: Glycine cleavage system H protein (120 aa).

The 83-residue stretch at 17–99 folds into the Lipoyl-binding domain; the sequence is VATVGITNYA…QGAGWFFKLK (83 aa). An N6-lipoyllysine modification is found at K58.

Belongs to the GcvH family. In terms of assembly, the glycine cleavage system is composed of four proteins: P, T, L and H. (R)-lipoate is required as a cofactor.

Functionally, the glycine cleavage system catalyzes the degradation of glycine. The H protein shuttles the methylamine group of glycine from the P protein to the T protein. The polypeptide is Glycine cleavage system H protein (Rhizobium etli (strain ATCC 51251 / DSM 11541 / JCM 21823 / NBRC 15573 / CFN 42)).